The primary structure comprises 184 residues: Interferon alpha-2 (184 aa).

The first 23 residues, 1-23 (MALPFSLLMALVVLSCHSSCSLG), serve as a signal peptide directing secretion. Cystine bridges form between C24–C122 and C52–C162.

The protein belongs to the alpha/beta interferon family. In terms of assembly, interacts with IFNAR2.

It localises to the secreted. Its function is as follows. Produced by macrophages, IFN-alpha have antiviral activities. The protein is Interferon alpha-2 of Equus caballus (Horse).